A 540-amino-acid polypeptide reads, in one-letter code: Chaperonin GroEL (540 aa).

ATP contacts are provided by residues 30–33, lysine 51, 87–91, glycine 415, and aspartate 496; these read TLGP and DGTTT.

Belongs to the chaperonin (HSP60) family. As to quaternary structure, forms a cylinder of 14 subunits composed of two heptameric rings stacked back-to-back. Interacts with the co-chaperonin GroES.

The protein localises to the cytoplasm. The catalysed reaction is ATP + H2O + a folded polypeptide = ADP + phosphate + an unfolded polypeptide.. In terms of biological role, together with its co-chaperonin GroES, plays an essential role in assisting protein folding. The GroEL-GroES system forms a nano-cage that allows encapsulation of the non-native substrate proteins and provides a physical environment optimized to promote and accelerate protein folding. The protein is Chaperonin GroEL of Thermodesulfovibrio yellowstonii (strain ATCC 51303 / DSM 11347 / YP87).